The chain runs to 114 residues: Eukaryotic translation initiation factor 6 (114 aa).

It belongs to the eIF-6 family. As to quaternary structure, monomer. Associates with the 60S ribosomal subunit.

It is found in the cytoplasm. The protein localises to the nucleus. It localises to the nucleolus. Functionally, binds to the 60S ribosomal subunit and prevents its association with the 40S ribosomal subunit to form the 80S initiation complex in the cytoplasm. May also be involved in ribosome biogenesis. The chain is Eukaryotic translation initiation factor 6 from Trypanosoma cruzi.